Reading from the N-terminus, the 202-residue chain is Orotate phosphoribosyltransferase (202 aa).

5-phospho-alpha-D-ribose 1-diphosphate-binding positions include Lys93 and 113–121; that span reads EDIITTGGS. The orotate site is built by Thr117 and Arg145.

This sequence belongs to the purine/pyrimidine phosphoribosyltransferase family. PyrE subfamily. Homodimer. Requires Mg(2+) as cofactor.

The enzyme catalyses orotidine 5'-phosphate + diphosphate = orotate + 5-phospho-alpha-D-ribose 1-diphosphate. It functions in the pathway pyrimidine metabolism; UMP biosynthesis via de novo pathway; UMP from orotate: step 1/2. Catalyzes the transfer of a ribosyl phosphate group from 5-phosphoribose 1-diphosphate to orotate, leading to the formation of orotidine monophosphate (OMP). This chain is Orotate phosphoribosyltransferase, found in Campylobacter fetus subsp. fetus (strain 82-40).